The chain runs to 208 residues: Large ribosomal subunit protein uL4 (208 aa).

The tract at residues 54 to 78 (RAEVSHTTKKPWNQKGTGRARAGMS) is disordered.

The protein belongs to the universal ribosomal protein uL4 family. Part of the 50S ribosomal subunit.

One of the primary rRNA binding proteins, this protein initially binds near the 5'-end of the 23S rRNA. It is important during the early stages of 50S assembly. It makes multiple contacts with different domains of the 23S rRNA in the assembled 50S subunit and ribosome. Its function is as follows. Forms part of the polypeptide exit tunnel. This is Large ribosomal subunit protein uL4 from Methylobacillus flagellatus (strain ATCC 51484 / DSM 6875 / VKM B-1610 / KT).